We begin with the raw amino-acid sequence, 429 residues long: tRNA(Ile2) 2-agmatinylcytidine synthetase TiaS (429 aa).

Positions 271–343 (VRGKVIKKYW…LTLNLEKFYP (73 aa)) form a DNA-binding region, OB.

Belongs to the TiaS family.

It localises to the cytoplasm. The enzyme catalyses cytidine(34) in tRNA(Ile2) + agmatine + ATP + H2O = 2-agmatinylcytidine(34) in tRNA(Ile2) + AMP + 2 phosphate + 2 H(+). ATP-dependent agmatine transferase that catalyzes the formation of 2-agmatinylcytidine (agm2C) at the wobble position (C34) of tRNA(Ile2), converting the codon specificity from AUG to AUA. The polypeptide is tRNA(Ile2) 2-agmatinylcytidine synthetase TiaS (Thermococcus sibiricus (strain DSM 12597 / MM 739)).